A 1133-amino-acid chain; its full sequence is Envelopment polyprotein (1133 aa).

The first 16 residues, 1-16 (MWSLLLLAALVGQGFA), serve as a signal peptide directing secretion. The Lumenal portion of the chain corresponds to 17–484 (LKNVFDMRIQ…PGFHGWATAA (468 aa)). 10 disulfide bridges follow: C61-C155, C107-C126, C131-C136, C173-C183, C208-C245, C232-C349, C374-C433, C378-C387, C403-C422, and C450-C473. N132 carries N-linked (GlcNAc...) asparagine; by host glycosylation. N-linked (GlcNAc...) asparagine; by host glycosylation is found at N233 and N345. Residue N397 is glycosylated (N-linked (GlcNAc...) asparagine; by host). A helical membrane pass occupies residues 485 to 504 (LLITFCFGWVLIPACTLAIL). Residues 505-626 (LVLKFFANIL…NLFRYKSRCY (122 aa)) lie on the Cytoplasmic side of the membrane. The binding to the ribonucleoprotein stretch occupies residues 514–531 (LHTSNQENRFKAILRKIK). 2 consecutive CCHC-type zinc fingers follow at residues 543 to 563 (CEIC…NLSC) and 568 to 589 (CPYC…YKVC). Binding to the ribonucleoprotein regions lie at residues 586–603 (YKVC…KKTV), 590–601 (QATHRFREDLKK), and 609–623 (GPGC…RYKS). In terms of domain architecture, ITAM spans 609–632 (GPGCYRTLNLFRYKSRCYILTMWT). The YxxL signature appears at 613–616 (YRTL). A helical membrane pass occupies residues 627–647 (ILTMWTLLLIIESILWAASAA). Over 648-1105 (EIPLVPLWTD…VMGIINGNWV (458 aa)) the chain is Lumenal. Cystine bridges form between C733–C768, C737–C775, C749–C883, C763–C894, C778–C902, C804–C813, C821–C830, and C861–C865. The tract at residues 755–775 (YEYENSWACNPPDCPGVGTGC) is fusion loop. N-linked (GlcNAc...) asparagine; by host glycosylation occurs at N926. Intrachain disulfides connect C968–C998, C991–C1043, C1008–C1013, C1044–C1049, and C1083–C1087. Residues 1106–1125 (VLIVLCVLLLFSLILLSILC) traverse the membrane as a helical segment. Residues 1120 to 1133 (LLSILCPVRKHKKS) are binding to the ribonucleoprotein. Residues 1126–1133 (PVRKHKKS) are Cytoplasmic-facing.

The protein belongs to the hantavirus envelope glycoprotein family. As to quaternary structure, homodimer. Homotetramer; forms heterotetrameric Gn-Gc spikes in the pre-fusion conformation. Interacts (via C-terminus) with the nucleoprotein. Interacts with host TUFM; this interaction contributes to the virus-induced degradation of mitochondria by autophagy, which leads to degradation of host MAVS and inhibition of type I interferon (IFN) responses. Interacts with host MAP1LC3B; this interaction contributes to the virus-induced degradation of mitochondria by autophagy, which leads to degradation of host MAVS and inhibition of type I interferon (IFN) responses. In terms of assembly, homodimer. Homotetramer; forms heterotetrameric Gn-Gc spikes in the pre-fusion conformation. Homotrimer; forms homotrimer in the post-fusion conformation at acidic pH. Interacts (via C-terminus) with the nucleoprotein. In terms of processing, envelope polyprotein precursor is quickly cleaved in vivo just after synthesis, presumably by host signal peptidase.

It is found in the virion membrane. The protein resides in the host cell surface. The protein localises to the host Golgi apparatus membrane. It localises to the host endoplasmic reticulum membrane. Its subcellular location is the host mitochondrion. Forms homotetramers with glycoprotein C at the surface of the virion. Attaches the virion to host cell receptors including integrin ITGAV/ITGB3. This attachment induces virion internalization predominantly through clathrin-dependent endocytosis. Mediates the assembly and budding of infectious virus particles through its interaction with the nucleocapsid protein and the viral genome. May dysregulate normal immune and endothelial cell responses through an ITAM motif. Translocates to mitochondria, binds to host TUFM and recruits MAP1LC3B. These interactions induce mitochondrial autophagy and therefore destruction of host MAVS leading to inhibition of type I interferon (IFN) responses. Concomitant breakdown of glycoprotein N is apparently prevented by the nucleoprotein that may inhibit Gn-stimulated autophagosome-lysosome fusion. Interacts with the viral genomic RNA. In terms of biological role, forms homotetramers with glycoprotein N at the surface of the virion. Attaches the virion to host cell receptors including integrin ITGAV/ITGB3. This attachment induces virion internalization predominantly through clathrin-dependent endocytosis. Class II fusion protein that promotes fusion of viral membrane with host endosomal membrane after endocytosis of the virion. This Homo sapiens (Human) protein is Envelopment polyprotein (GP).